The following is a 711-amino-acid chain: Double-stranded RNA-specific editase 1 (711 aa).

The disordered stretch occupies residues 1 to 79 (MDIEDEENMS…RRKTPGPVLP (79 aa)). A compositionally biased stretch (basic residues) spans 63-73 (SKYRLKKRRKT). Positions 78-144 (LPKNALMQLN…AEKALRSFVQ (67 aa)) constitute a DRBM 1 domain. Interaction with substrate RNA stretches follow at residues 83 to 88 (LMQLNE) and 104 to 105 (VH). Serine 149 is subject to Phosphoserine. A disordered region spans residues 176–220 (LFNGFETPDKSEPPFYVGSNGDDSFSSSGDVSLSASPVPASLTQP). Positions 192 to 213 (VGSNGDDSFSSSGDVSLSASPV) are enriched in low complexity. Positions 231 to 298 (PSGKNPVMIL…AQSALATVFN (68 aa)) constitute a DRBM 2 domain. Interaction with substrate RNA regions lie at residues 237 to 242 (VMILNE) and histidine 259. An A to I editase domain is found at 370 to 707 (SVSTGTKCIN…VEKPTEQDQF (338 aa)). Histidine 394 contributes to the Zn(2+) binding site. The active-site Proton donor is glutamate 396. Residues arginine 400 and arginine 401 each contribute to the 1D-myo-inositol hexakisphosphate site. Cysteine 451 and cysteine 526 together coordinate Zn(2+). The 1D-myo-inositol hexakisphosphate site is built by lysine 529, arginine 532, lysine 639, lysine 672, lysine 682, and lysine 700.

As to quaternary structure, homodimer. Homodimerization is essential for its catalytic activity. Can form heterodimers with isoform 5 of ADAR/ADAR1. Requires 1D-myo-inositol hexakisphosphate as cofactor. As to expression, brain and peripheral tissues.

It localises to the nucleus. It is found in the nucleolus. The catalysed reaction is adenosine in double-stranded RNA + H2O + H(+) = inosine in double-stranded RNA + NH4(+). Functionally, catalyzes the hydrolytic deamination of adenosine to inosine in double-stranded RNA (dsRNA) referred to as A-to-I RNA editing. This may affect gene expression and function in a number of ways that include mRNA translation by changing codons and hence the amino acid sequence of proteins; pre-mRNA splicing by altering splice site recognition sequences; RNA stability by changing sequences involved in nuclease recognition; genetic stability in the case of RNA virus genomes by changing sequences during viral RNA replication; and RNA structure-dependent activities such as microRNA production or targeting or protein-RNA interactions. Can edit both viral and cellular RNAs and can edit RNAs at multiple sites (hyper-editing) or at specific sites (site-specific editing). Its cellular RNA substrates include: bladder cancer-associated protein (BLCAP), neurotransmitter receptors for glutamate (GRIA2 and GRIK2) and serotonin (HTR2C), GABA receptor (GABRA3) and potassium voltage-gated channel (KCNA1). Site-specific RNA editing of transcripts encoding these proteins results in amino acid substitutions which consequently alter their functional activities. Edits GRIA2 at both the Q/R and R/G sites efficiently but converts the adenosine in hotspot1 much less efficiently. Can inhibit cell proliferation and migration and can stimulate exocytosis. In Rattus norvegicus (Rat), this protein is Double-stranded RNA-specific editase 1 (Adarb1).